A 190-amino-acid chain; its full sequence is Ras-like GTP-binding protein RhoL (190 aa).

Residue 18-25 (GDGMVGKT) coordinates GTP. The Effector region motif lies at 40–48 (YIPTVFDNH). GTP is bound by residues 65-69 (DTAGQ) and 123-126 (TKLD). Cysteine methyl ester is present on Cys-187. Residue Cys-187 is the site of S-geranylgeranyl cysteine attachment. A propeptide spans 188 to 190 (KIL) (removed in mature form).

This sequence belongs to the small GTPase superfamily. Rho family. Highly expressed in the embryonic cephalic mesoderm starting from stage 6 and fading by stage 11. Hemocyte precursor cells.

Its subcellular location is the cell membrane. Essential for the maturation of hemocytes. The chain is Ras-like GTP-binding protein RhoL (RhoL) from Drosophila melanogaster (Fruit fly).